Reading from the N-terminus, the 572-residue chain is Methionine--tRNA ligase (572 aa).

A 'HIGH' region motif is present at residues 11–21 (PYINGIKHLGN). Zn(2+) is bound by residues Cys-143, Cys-146, Cys-156, and Cys-159. The 'KMSKS' region motif lies at 346-350 (QFSTS). Thr-349 provides a ligand contact to ATP.

It belongs to the class-I aminoacyl-tRNA synthetase family. MetG type 1 subfamily. In terms of assembly, monomer. Requires Zn(2+) as cofactor.

It localises to the cytoplasm. It catalyses the reaction tRNA(Met) + L-methionine + ATP = L-methionyl-tRNA(Met) + AMP + diphosphate. Functionally, is required not only for elongation of protein synthesis but also for the initiation of all mRNA translation through initiator tRNA(fMet) aminoacylation. This chain is Methionine--tRNA ligase, found in Roseobacter denitrificans (strain ATCC 33942 / OCh 114) (Erythrobacter sp. (strain OCh 114)).